Reading from the N-terminus, the 325-residue chain is GTP 3',8-cyclase (325 aa).

Residues Gly-10–Asp-229 enclose the Radical SAM core domain. Arg-19 lines the GTP pocket. 2 residues coordinate [4Fe-4S] cluster: Cys-26 and Cys-30. Tyr-32 is an S-adenosyl-L-methionine binding site. Cys-33 contributes to the [4Fe-4S] cluster binding site. Arg-69 provides a ligand contact to GTP. Position 73 (Gly-73) interacts with S-adenosyl-L-methionine. Thr-100 contributes to the GTP binding site. S-adenosyl-L-methionine is bound at residue Ser-124. Residue Lys-161 participates in GTP binding. Met-195 provides a ligand contact to S-adenosyl-L-methionine. Residues Cys-257 and Cys-260 each coordinate [4Fe-4S] cluster. Arg-262–Arg-264 provides a ligand contact to GTP. Cys-274 is a binding site for [4Fe-4S] cluster.

It belongs to the radical SAM superfamily. MoaA family. In terms of assembly, monomer and homodimer. It depends on [4Fe-4S] cluster as a cofactor.

It carries out the reaction GTP + AH2 + S-adenosyl-L-methionine = (8S)-3',8-cyclo-7,8-dihydroguanosine 5'-triphosphate + 5'-deoxyadenosine + L-methionine + A + H(+). Its pathway is cofactor biosynthesis; molybdopterin biosynthesis. Catalyzes the cyclization of GTP to (8S)-3',8-cyclo-7,8-dihydroguanosine 5'-triphosphate. The polypeptide is GTP 3',8-cyclase (Peptoclostridium acidaminophilum (Eubacterium acidaminophilum)).